Consider the following 163-residue polypeptide: Norbelladine synthase (163 aa).

Tyramine is bound at residue 68–71 (YHKE). The active-site Proton donor is K83.

It belongs to the BetVI family. In terms of tissue distribution, mostly expressed in bulbs, and, to a lower extent, in roots, stems, leaves and flowers.

The enzyme catalyses 3,4-dihydroxybenzaldehyde + tyramine + AH2 = norbelladine + A + H2O. It participates in alkaloid biosynthesis. Its function is as follows. Catalyzes the condensation of tyramine and 3,4-dihydroxybenzaldehyde (3,4-DHBA) to form norbelladine, the common precursor to all Amaryllidaceae alkaloids such as galanthamine, lycorine and haemanthamine, and including haemanthamine- and crinamine-type alkaloids, promising anticancer agents. This chain is Norbelladine synthase, found in Narcissus pseudonarcissus (Daffodil).